The primary structure comprises 612 residues: Poly(A) RNA polymerase, mitochondrial (612 aa).

A mitochondrion-targeting transit peptide spans 1-57 (MNSLVRRSAQQLSLWRTYCIKHNASEAASPGRNAGRPNYEEFIGRHQRQAQCSIVVQ). Residues 83–89 (YCVRQDE) and 228–229 (GC) each bind ATP. Positions 230 and 232 each coordinate Mg(2+). Residues 427–463 (SLSELLLQFFEFYSQFDFHNRAISLNEGKPLSKPDHS) form the PAP-associated domain. Disordered stretches follow at residues 555-574 (AGATSSSTPPTPAITYKSAS) and 588-612 (SELKQLRGSGSSVPTSSPNNRRRSR).

The protein belongs to the DNA polymerase type-B-like family. Requires Mg(2+) as cofactor. The cofactor is Mn(2+).

Its subcellular location is the mitochondrion. The catalysed reaction is RNA(n) + ATP = RNA(n)-3'-adenine ribonucleotide + diphosphate. Its function is as follows. Polymerase that creates the 3' poly(A) tail of mitochondrial transcripts. This is not required for transcript stability or translation but may maintain mRNA integrity by protecting 3' termini from degradation. The sequence is that of Poly(A) RNA polymerase, mitochondrial from Drosophila melanogaster (Fruit fly).